The following is a 51-amino-acid chain: Insulin (51 aa).

3 disulfide bridges follow: Cys-7–Cys-37, Cys-19–Cys-50, and Cys-36–Cys-41.

This sequence belongs to the insulin family. In terms of assembly, heterodimer of a B chain and an A chain linked by two disulfide bonds.

The protein localises to the secreted. In terms of biological role, insulin decreases blood glucose concentration. It increases cell permeability to monosaccharides, amino acids and fatty acids. It accelerates glycolysis, the pentose phosphate cycle, and glycogen synthesis in liver. In Camelus dromedarius (Dromedary), this protein is Insulin (INS).